The following is a 336-amino-acid chain: Hdr-like menaquinol oxidoreductase cytochrome b-like subunit (336 aa).

6 helical membrane-spanning segments follow: residues 4-24 (ALYI…IGTI), 60-80 (IDSP…VFLF), 102-122 (WLWL…IRHL), 145-165 (VAIV…LAFL), 184-204 (HLIL…RYII), and 232-252 (LHWL…YIPF).

The protein localises to the cell membrane. Its function is as follows. Has menaquinol-oxidizing activity. The HmeC and HmeD subunits may together mediate electron transfer from menaquinol to an unidentified electron acceptor on the cytoplasmic side of the membrane. This is Hdr-like menaquinol oxidoreductase cytochrome b-like subunit (hmeC) from Archaeoglobus profundus (strain DSM 5631 / JCM 9629 / NBRC 100127 / Av18).